Consider the following 165-residue polypeptide: NADH-quinone oxidoreductase subunit I (165 aa).

4Fe-4S ferredoxin-type domains are found at residues 66-98 (HRLT…ITAT) and 109-138 (SKFT…MDTG). Residues C78, C81, C84, C88, C118, C121, C124, and C128 each coordinate [4Fe-4S] cluster.

Belongs to the complex I 23 kDa subunit family. In terms of assembly, NDH-1 is composed of 14 different subunits. Subunits NuoA, H, J, K, L, M, N constitute the membrane sector of the complex. The cofactor is [4Fe-4S] cluster.

Its subcellular location is the cell inner membrane. It catalyses the reaction a quinone + NADH + 5 H(+)(in) = a quinol + NAD(+) + 4 H(+)(out). NDH-1 shuttles electrons from NADH, via FMN and iron-sulfur (Fe-S) centers, to quinones in the respiratory chain. The immediate electron acceptor for the enzyme in this species is believed to be ubiquinone. Couples the redox reaction to proton translocation (for every two electrons transferred, four hydrogen ions are translocated across the cytoplasmic membrane), and thus conserves the redox energy in a proton gradient. The sequence is that of NADH-quinone oxidoreductase subunit I from Campylobacter fetus subsp. fetus (strain 82-40).